The following is a 262-amino-acid chain: tRNA pseudouridine synthase A (262 aa).

Residue aspartate 51 is the Nucleophile of the active site. Residue tyrosine 109 participates in substrate binding.

This sequence belongs to the tRNA pseudouridine synthase TruA family. As to quaternary structure, homodimer.

The enzyme catalyses uridine(38/39/40) in tRNA = pseudouridine(38/39/40) in tRNA. Formation of pseudouridine at positions 38, 39 and 40 in the anticodon stem and loop of transfer RNAs. The chain is tRNA pseudouridine synthase A from Aliivibrio fischeri (strain ATCC 700601 / ES114) (Vibrio fischeri).